A 1370-amino-acid polypeptide reads, in one-letter code: DNA-directed RNA polymerase subunit beta (1370 aa).

It belongs to the RNA polymerase beta chain family. The RNAP catalytic core consists of 2 alpha, 1 beta, 1 beta' and 1 omega subunit. When a sigma factor is associated with the core the holoenzyme is formed, which can initiate transcription.

The catalysed reaction is RNA(n) + a ribonucleoside 5'-triphosphate = RNA(n+1) + diphosphate. DNA-dependent RNA polymerase catalyzes the transcription of DNA into RNA using the four ribonucleoside triphosphates as substrates. This chain is DNA-directed RNA polymerase subunit beta, found in Geotalea daltonii (strain DSM 22248 / JCM 15807 / FRC-32) (Geobacter daltonii).